The chain runs to 496 residues: Cytochrome P450 71D178 (496 aa).

The helical; Signal-anchor for type II membrane protein transmembrane segment at 1–21 threads the bilayer; that stretch reads MDISISWVVIILLVLSYLILM. Cys-435 serves as a coordination point for heme.

Belongs to the cytochrome P450 family. Heme serves as cofactor. As to expression, expressed in flowers, leaves and stems, especially in glandular trichomes.

The protein localises to the membrane. It catalyses the reaction (4S)-limonene + reduced [NADPH--hemoprotein reductase] + O2 = (1S,5R)-carveol + oxidized [NADPH--hemoprotein reductase] + H2O + H(+). The enzyme catalyses gamma-terpinene + 2 reduced [NADPH--hemoprotein reductase] + 2 O2 = carvacrol + 2 oxidized [NADPH--hemoprotein reductase] + 3 H2O + 2 H(+). It carries out the reaction gamma-terpinene + 2 reduced [NADPH--hemoprotein reductase] + 2 O2 = thymol + 2 oxidized [NADPH--hemoprotein reductase] + 3 H2O + 2 H(+). The catalysed reaction is (4R)-limonene + reduced [NADPH--hemoprotein reductase] + O2 = (1R,6S)-isopiperitenol + oxidized [NADPH--hemoprotein reductase] + H2O + H(+). Its pathway is secondary metabolite biosynthesis; terpenoid biosynthesis. In terms of biological role, involved in the biosynthesis of phenolic monoterpenes natural products thymol and carvacrol which have a broad range of biological activities acting as antimicrobial compounds, insecticides, antioxidants and pharmaceutical agents. Catalyzes the C2- and C3-hydroxylation of gamma-terpinene to produce carvacrol and thymol, respectively. Also mediates the C6-hydroxylation of (4S)-limonene to form carveol and the C3-hydroxylation of (4R)-limonene to generate (+)-trans-isopiperitenol. This chain is Cytochrome P450 71D178, found in Origanum vulgare (Wild marjoram).